We begin with the raw amino-acid sequence, 239 residues long: Ribosomal RNA small subunit methyltransferase G (239 aa).

S-adenosyl-L-methionine-binding positions include Gly105, Leu110, Val156 to Glu157, and Arg169.

It belongs to the methyltransferase superfamily. RNA methyltransferase RsmG family.

The protein localises to the cytoplasm. It carries out the reaction guanosine(527) in 16S rRNA + S-adenosyl-L-methionine = N(7)-methylguanosine(527) in 16S rRNA + S-adenosyl-L-homocysteine. Functionally, specifically methylates the N7 position of guanine in position 527 of 16S rRNA. The polypeptide is Ribosomal RNA small subunit methyltransferase G (Verminephrobacter eiseniae (strain EF01-2)).